Here is a 170-residue protein sequence, read N- to C-terminus: Peptide deformylase 1 (170 aa).

Fe cation contacts are provided by Cys-91 and His-133. The active site involves Glu-134. A Fe cation-binding site is contributed by His-137.

The protein belongs to the polypeptide deformylase family. Fe(2+) serves as cofactor.

It catalyses the reaction N-terminal N-formyl-L-methionyl-[peptide] + H2O = N-terminal L-methionyl-[peptide] + formate. In terms of biological role, removes the formyl group from the N-terminal Met of newly synthesized proteins. Requires at least a dipeptide for an efficient rate of reaction. N-terminal L-methionine is a prerequisite for activity but the enzyme has broad specificity at other positions. This is Peptide deformylase 1 from Vibrio vulnificus (strain CMCP6).